The chain runs to 773 residues: Molybdenum cofactor sulfurase (773 aa).

Residue Lys-243 is modified to N6-(pyridoxal phosphate)lysine. Cys-410 is an active-site residue. The region spanning 632–773 is the MOSC domain; it reads LRLLRQSGQR…LSCGDTVLVE (142 aa). Residue Ser-731 is modified to Phosphoserine.

It belongs to the class-V pyridoxal-phosphate-dependent aminotransferase family. MOCOS subfamily. Pyridoxal 5'-phosphate is required as a cofactor.

The enzyme catalyses Mo-molybdopterin + L-cysteine + AH2 = thio-Mo-molybdopterin + L-alanine + A + H2O. The protein operates within cofactor biosynthesis; molybdopterin biosynthesis. In terms of biological role, sulfurates the molybdenum cofactor. Sulfation of molybdenum is essential for xanthine dehydrogenase (XDH) and aldehyde oxidase (ADO) enzymes in which molybdenum cofactor is liganded by 1 oxygen and 1 sulfur atom in active form. The sequence is that of Molybdenum cofactor sulfurase from Drosophila ananassae (Fruit fly).